Reading from the N-terminus, the 484-residue chain is Ribosome biogenesis protein YTM1 (484 aa).

The tract at residues 13–95 (VKVTFTTTEA…ESNLTLQYVR (83 aa)) is ubiquitin-like (UBL) domain. WD repeat units follow at residues 122 to 161 (SPSGRWSGDNFQRGQDRILSASFDGLLRIWNASGQVIATS), 168 to 206 (GHTASIKAAKFLTNSQLASAGMDRTVRVWKYTESDHFSG), 216 to 255 (GHTGSIDSLEVDGASKRILTASADGSIGFWSTSKASAPEA), 288 to 328 (IHSA…VVTT), 330 to 373 (STSH…ATTS), 379 to 419 (GHAN…PATQ), and 448 to 484 (GEGCKVFGVVWDAELGIVSGAEDKRVQINAGRDVVAE).

This sequence belongs to the WD repeat WDR12/YTM1 family. Component of the NOP7 complex, composed of ERB1, NOP7 and YTM1. The complex is held together by ERB1, which interacts with NOP7 via its N-terminal domain and with YTM1 via a high-affinity interaction between the seven-bladed beta-propeller domains of the 2 proteins. The NOP7 complex associates with the 66S pre-ribosome. Interacts (via UBL domain) with MDN1 (via VWFA/MIDAS domain).

It is found in the nucleus. Its subcellular location is the nucleolus. The protein resides in the nucleoplasm. Component of the NOP7 complex, which is required for maturation of the 25S and 5.8S ribosomal RNAs and formation of the 60S ribosome. In Chaetomium globosum (strain ATCC 6205 / CBS 148.51 / DSM 1962 / NBRC 6347 / NRRL 1970) (Soil fungus), this protein is Ribosome biogenesis protein YTM1.